The chain runs to 289 residues: Oxaloacetate decarboxylase (289 aa).

S50 provides a ligand contact to substrate. D88 is a binding site for Mg(2+). Substrate is bound by residues R159 and H235.

It belongs to the isocitrate lyase/PEP mutase superfamily. Oxaloacetate decarboxylase family. In terms of assembly, homotetramer; dimer of dimers. The cofactor is Mg(2+).

It catalyses the reaction oxaloacetate + H(+) = pyruvate + CO2. Functionally, catalyzes the decarboxylation of oxaloacetate into pyruvate. Seems to play a role in maintaining cellular concentrations of bicarbonate and pyruvate. This Pseudomonas syringae pv. tomato (strain ATCC BAA-871 / DC3000) protein is Oxaloacetate decarboxylase.